The sequence spans 497 residues: MVFASAGAAVSGAILALDLGTTGIRALLFDPSGAVAAGAYREVPQIYPQPGWVEHDPQTIWQLTCEVVAEVQAQSAARIAAVGLTNQRETCLLWDAATGTPHGNAIVWQDRRTAALCQKLRAEGWEAPIRQRTGLVIDAYFSATKLAWLLAHRRPYYPGLKAGTIDSWIIWKLTGGRVHATDTSNASRTMLFNLHTRDWDPELLELLAIPAEILPAIKPSLGVLAETDVRVLGYSAPIAGILGDQQAALFAHGCDRPGLVKCTYGTGSFLVAHTGDRPIRSRHQLLTTVAWSDRTSTGYALEGALFTTGASVQWLRDGLGIIETADESEALAASVPDSGGVYFVPALSGLGAPHWDMGARGLLIGLTRGSGRGQIARAVLEAIAFQTREVTDALAADMGTPLTRLKVDGGAVRNNLLMQLQADVLGVPVERPQLIDTTAQGAAFAAGLGTGFWGDYAELVAARPIDRVFESGERQLVLQAHYAVWQRAVERSREWVR.

Residue Thr21 coordinates ADP. Residues Thr21 and Thr22 each contribute to the ATP site. Thr21 serves as a coordination point for sn-glycerol 3-phosphate. ADP is bound at residue Arg25. Positions 88, 89, 140, and 244 each coordinate sn-glycerol 3-phosphate. Glycerol contacts are provided by Arg88, Glu89, Tyr140, Asp244, and Gln245. 2 residues coordinate ADP: Thr266 and Gly309. ATP is bound by residues Thr266, Gly309, Gln313, and Gly410. Positions 410 and 414 each coordinate ADP.

It belongs to the FGGY kinase family.

It carries out the reaction glycerol + ATP = sn-glycerol 3-phosphate + ADP + H(+). The protein operates within polyol metabolism; glycerol degradation via glycerol kinase pathway; sn-glycerol 3-phosphate from glycerol: step 1/1. Its activity is regulated as follows. Inhibited by fructose 1,6-bisphosphate (FBP). In terms of biological role, key enzyme in the regulation of glycerol uptake and metabolism. Catalyzes the phosphorylation of glycerol to yield sn-glycerol 3-phosphate. This is Glycerol kinase from Gloeobacter violaceus (strain ATCC 29082 / PCC 7421).